The chain runs to 85 residues: Cell division topological specificity factor (85 aa).

Belongs to the MinE family.

Its function is as follows. Prevents the cell division inhibition by proteins MinC and MinD at internal division sites while permitting inhibition at polar sites. This ensures cell division at the proper site by restricting the formation of a division septum at the midpoint of the long axis of the cell. The chain is Cell division topological specificity factor from Shewanella sp. (strain ANA-3).